A 44-amino-acid polypeptide reads, in one-letter code: Photosystem I reaction center subunit IX (44 aa).

A helical transmembrane segment spans residues 7-27; sequence YLSVAPVVSTIWFGALAGLLI.

This sequence belongs to the PsaJ family.

The protein localises to the plastid. It localises to the chloroplast thylakoid membrane. Functionally, may help in the organization of the PsaE and PsaF subunits. The polypeptide is Photosystem I reaction center subunit IX (Cucumis sativus (Cucumber)).